The chain runs to 282 residues: Shikimate dehydrogenase (NADP(+)) (282 aa).

Shikimate-binding positions include 19-21 (SFS) and T66. The active-site Proton acceptor is the K70. Positions 91 and 106 each coordinate shikimate. NADP(+) is bound by residues 130 to 134 (GAGGA), 152 to 157 (NRTVEK), T196, M200, and L224. Shikimate is bound at residue Y226. G247 is an NADP(+) binding site.

This sequence belongs to the shikimate dehydrogenase family. As to quaternary structure, homodimer.

It catalyses the reaction shikimate + NADP(+) = 3-dehydroshikimate + NADPH + H(+). The protein operates within metabolic intermediate biosynthesis; chorismate biosynthesis; chorismate from D-erythrose 4-phosphate and phosphoenolpyruvate: step 4/7. Its function is as follows. Involved in the biosynthesis of the chorismate, which leads to the biosynthesis of aromatic amino acids. Catalyzes the reversible NADPH linked reduction of 3-dehydroshikimate (DHSA) to yield shikimate (SA). In Methanocaldococcus jannaschii (strain ATCC 43067 / DSM 2661 / JAL-1 / JCM 10045 / NBRC 100440) (Methanococcus jannaschii), this protein is Shikimate dehydrogenase (NADP(+)).